A 747-amino-acid chain; its full sequence is Superkiller protein 7 (747 aa).

Positions 14–51 are disordered; it reads KSKGLLSADQSHSTSKSASLLERLHKNRETKDNNAETK. Residues 21 to 31 are compositionally biased toward polar residues; sequence ADQSHSTSKSA. Over residues 35 to 51 the composition is skewed to basic and acidic residues; that stretch reads ERLHKNRETKDNNAETK. A phosphoserine mark is found at Ser-88 and Ser-90. The interval 89 to 117 is disordered; sequence NSDLEKQGKSVTLDSKENELPTKRKSPDD. Positions 265–503 constitute a tr-type G domain; the sequence is PLNLTCLFLG…YVPEWYEGPT (239 aa). Residues 274-281 are G1; the sequence is GDTNAGKS. 274–281 serves as a coordination point for GTP; that stretch reads GDTNAGKS. The tract at residues 331–335 is G2; it reads GFSMF. Positions 356-359 are G3; sequence DTPG. GTP-binding positions include 356 to 360 and 427 to 430; these read DTPGS and NKAD. Positions 427–430 are G4; sequence NKAD. The tract at residues 467–469 is G5; it reads SGL.

Belongs to the TRAFAC class translation factor GTPase superfamily. Classic translation factor GTPase family. In terms of assembly, interacts with the exosome and with the SKI complex composed of at least SKI2, SKI3 and SKI8. Interacts directly with SKI3 and SKI8.

The protein resides in the cytoplasm. Functionally, represses the expression of non-poly(A) mRNAs like L-A or M viruses and is therefore involved in antiviral system. Mediates interactions via its N-terminus between the exosome and the SKI complex which operate in the 3'-to-5' mRNA-decay pathway. By interacting with NAM7, is also required for nonsense-mediated 3'-to-5' mRNA-decay (NMD). May recognize a stalled 80S ribosome at the 3'-end of a nonstop mRNA which leads to the recruitment of the exosome and SKI complexes to the mRNAs to be degraded. In Saccharomyces cerevisiae (strain ATCC 204508 / S288c) (Baker's yeast), this protein is Superkiller protein 7 (SKI7).